A 226-amino-acid polypeptide reads, in one-letter code: Ribonuclease 3 (226 aa).

The 123-residue stretch at 5-127 folds into the RNase III domain; the sequence is IFQRGDPIGH…IVAAIYLDCG (123 aa). E40 is a binding site for Mg(2+). The active site involves D44. Residues D113 and E116 each contribute to the Mg(2+) site. Residue E116 is part of the active site. The DRBM domain maps to 154–224; that stretch reads DPKTRLQEWL…ATLVIAQLDS (71 aa).

The protein belongs to the ribonuclease III family. As to quaternary structure, homodimer. Mg(2+) is required as a cofactor.

It localises to the cytoplasm. The catalysed reaction is Endonucleolytic cleavage to 5'-phosphomonoester.. Digests double-stranded RNA. Involved in the processing of primary rRNA transcript to yield the immediate precursors to the large and small rRNAs (23S and 16S). Processes some mRNAs, and tRNAs when they are encoded in the rRNA operon. Processes pre-crRNA and tracrRNA of type II CRISPR loci if present in the organism. The polypeptide is Ribonuclease 3 (Xanthomonas oryzae pv. oryzae (strain KACC10331 / KXO85)).